A 224-amino-acid polypeptide reads, in one-letter code: Ras-related protein Rab-11C (224 aa).

Gly-17–Ser-24 contacts GTP. Residues Thr-39–Phe-47 carry the Effector region motif. Residues Asp-65 to Gln-69 and Asn-123 to Asp-126 contribute to the GTP site. The interval Gln-194–Cys-224 is disordered. Residues Cys-223 and Cys-224 are each lipidated (S-geranylgeranyl cysteine).

It belongs to the small GTPase superfamily. Rab family.

It localises to the membrane. The chain is Ras-related protein Rab-11C (rab11C) from Dictyostelium discoideum (Social amoeba).